Consider the following 155-residue polypeptide: 6,7-dimethyl-8-ribityllumazine synthase (155 aa).

Residues Phe-23, 57–59 (AFE), and 81–83 (AVI) each bind 5-amino-6-(D-ribitylamino)uracil. (2S)-2-hydroxy-3-oxobutyl phosphate is bound at residue 86–87 (ST). Catalysis depends on His-89, which acts as the Proton donor. Phe-114 contacts 5-amino-6-(D-ribitylamino)uracil. (2S)-2-hydroxy-3-oxobutyl phosphate is bound at residue Arg-128.

This sequence belongs to the DMRL synthase family.

It carries out the reaction (2S)-2-hydroxy-3-oxobutyl phosphate + 5-amino-6-(D-ribitylamino)uracil = 6,7-dimethyl-8-(1-D-ribityl)lumazine + phosphate + 2 H2O + H(+). The protein operates within cofactor biosynthesis; riboflavin biosynthesis; riboflavin from 2-hydroxy-3-oxobutyl phosphate and 5-amino-6-(D-ribitylamino)uracil: step 1/2. Its function is as follows. Catalyzes the formation of 6,7-dimethyl-8-ribityllumazine by condensation of 5-amino-6-(D-ribitylamino)uracil with 3,4-dihydroxy-2-butanone 4-phosphate. This is the penultimate step in the biosynthesis of riboflavin. This Pelobacter propionicus (strain DSM 2379 / NBRC 103807 / OttBd1) protein is 6,7-dimethyl-8-ribityllumazine synthase.